The primary structure comprises 122 residues: Ribosome-binding factor A (122 aa).

This sequence belongs to the RbfA family. As to quaternary structure, monomer. Binds 30S ribosomal subunits, but not 50S ribosomal subunits or 70S ribosomes.

It is found in the cytoplasm. Functionally, one of several proteins that assist in the late maturation steps of the functional core of the 30S ribosomal subunit. Associates with free 30S ribosomal subunits (but not with 30S subunits that are part of 70S ribosomes or polysomes). Required for efficient processing of 16S rRNA. May interact with the 5'-terminal helix region of 16S rRNA. The sequence is that of Ribosome-binding factor A from Syntrophomonas wolfei subsp. wolfei (strain DSM 2245B / Goettingen).